The chain runs to 268 residues: Hydroxyethylthiazole kinase (268 aa).

Substrate is bound at residue Met-47. 2 residues coordinate ATP: Arg-122 and Thr-168. Ala-195 is a binding site for substrate.

The protein belongs to the Thz kinase family. Mg(2+) serves as cofactor.

The enzyme catalyses 5-(2-hydroxyethyl)-4-methylthiazole + ATP = 4-methyl-5-(2-phosphooxyethyl)-thiazole + ADP + H(+). The protein operates within cofactor biosynthesis; thiamine diphosphate biosynthesis; 4-methyl-5-(2-phosphoethyl)-thiazole from 5-(2-hydroxyethyl)-4-methylthiazole: step 1/1. Its function is as follows. Catalyzes the phosphorylation of the hydroxyl group of 4-methyl-5-beta-hydroxyethylthiazole (THZ). This Rhizobium rhizogenes (strain K84 / ATCC BAA-868) (Agrobacterium radiobacter) protein is Hydroxyethylthiazole kinase.